Here is a 55-residue protein sequence, read N- to C-terminus: Large ribosomal subunit protein bL33 (55 aa).

This sequence belongs to the bacterial ribosomal protein bL33 family.

The chain is Large ribosomal subunit protein bL33 from Pseudarthrobacter chlorophenolicus (strain ATCC 700700 / DSM 12829 / CIP 107037 / JCM 12360 / KCTC 9906 / NCIMB 13794 / A6) (Arthrobacter chlorophenolicus).